The primary structure comprises 489 residues: Tripartite motif-containing protein 10 (489 aa).

An RING-type zinc finger spans residues 16-61 (CPICQGTLREPVTIDCGHNFCRGCLTRYCEIPGPESEESLSCPLCK). A B box-type zinc finger spans residues 94 to 135 (EVEDACPEHGEKIYFFCEEDEAQLCVVCRETGQHGAHTVRFL). Zn(2+) is bound by residues cysteine 99, histidine 102, cysteine 121, and histidine 127. Positions 144–180 (EQIQKCLVCLRKEREEIQETQSRENKRIQVLLTQVAT) form a coiled coil. Positions 292-486 (QEMKTFLEKL…FSLSCQEGAV (195 aa)) constitute a B30.2/SPRY domain.

It belongs to the TRIM/RBCC family. As to quaternary structure, interacts with IFNAR1; this interaction prevents association of IFNAR1 with TYK2. As to expression, expressed in embryonic liver.

Its subcellular location is the cytoplasm. In terms of biological role, E3 ligase that plays an essential role in the differentiation and survival of terminal erythroid cells. May directly bind to PTEN and promote its ubiquitination, resulting in its proteasomal degradation and activation of hypertrophic signaling. In addition, plays a role in immune response regulation by repressing the phosphorylation of STAT1 and STAT2 in the interferon/JAK/STAT signaling pathway independent of its E3 ligase activity. Mechanistically, interacts with the intracellular domain of IFNAR1 and thereby inhibits the association between TYK2 and IFNAR1. In Mus musculus (Mouse), this protein is Tripartite motif-containing protein 10 (Trim10).